The chain runs to 192 residues: MTSVLMIDNCDSFTYNLVDQFSPHGTIVIVKRNHPFYDGEIEAIMALTSICITPGPCYPAEAALNSCSIIGHLAGRIPILGICLGQQALGQARGGLVIFAHGKLSNIEHNGIFAPLFNPPRALPAGRYHSLVVEPARIEVTGQCNQLEVVPQEIMAIRHRDLPVEGVQFHPESILSSNGAAILANLIHRPCH.

One can recognise a Glutamine amidotransferase type-1 domain in the interval 3–192; the sequence is SVLMIDNCDS…LANLIHRPCH (190 aa). Active-site residues include cysteine 83, histidine 170, and glutamate 172.

As to quaternary structure, monomer. Heterodimer consisting of two non-identical subunits: a glutamine amidotransferase subunit (PabA) and a aminodeoxychorismate synthase subunit (PabB).

The catalysed reaction is chorismate + L-glutamine = 4-amino-4-deoxychorismate + L-glutamate. The protein operates within cofactor biosynthesis; tetrahydrofolate biosynthesis; 4-aminobenzoate from chorismate: step 1/2. Part of a heterodimeric complex that catalyzes the two-step biosynthesis of 4-amino-4-deoxychorismate (ADC), a precursor of p-aminobenzoate (PABA) and tetrahydrofolate. In the first step, a glutamine amidotransferase (PabA) generates ammonia as a substrate that, along with chorismate, is used in the second step, catalyzed by aminodeoxychorismate synthase (PabB) to produce ADC. PabA converts glutamine into glutamate only in the presence of stoichiometric amounts of PabB. In Streptomyces lividans, this protein is Aminodeoxychorismate synthase component 2.